The sequence spans 55 residues: ATP synthase F(0) complex subunit 8 (55 aa).

Residues 7-24 (APWFSIMIMTWLTLALLI) form a helical membrane-spanning segment. The disordered stretch occupies residues 34-55 (TNPPSSKPSLTTKPTPWAWPWT).

This sequence belongs to the ATPase protein 8 family. In terms of assembly, component of the ATP synthase complex composed at least of ATP5F1A/subunit alpha, ATP5F1B/subunit beta, ATP5MC1/subunit c (homooctomer), MT-ATP6/subunit a, MT-ATP8/subunit 8, ATP5ME/subunit e, ATP5MF/subunit f, ATP5MG/subunit g, ATP5MK/subunit k, ATP5MJ/subunit j, ATP5F1C/subunit gamma, ATP5F1D/subunit delta, ATP5F1E/subunit epsilon, ATP5PF/subunit F6, ATP5PB/subunit b, ATP5PD/subunit d, ATP5PO/subunit OSCP. ATP synthase complex consists of a soluble F(1) head domain (subunits alpha(3) and beta(3)) - the catalytic core - and a membrane F(0) domain - the membrane proton channel (subunits c, a, 8, e, f, g, k and j). These two domains are linked by a central stalk (subunits gamma, delta, and epsilon) rotating inside the F1 region and a stationary peripheral stalk (subunits F6, b, d, and OSCP).

It localises to the mitochondrion membrane. Functionally, subunit 8, of the mitochondrial membrane ATP synthase complex (F(1)F(0) ATP synthase or Complex V) that produces ATP from ADP in the presence of a proton gradient across the membrane which is generated by electron transport complexes of the respiratory chain. ATP synthase complex consist of a soluble F(1) head domain - the catalytic core - and a membrane F(1) domain - the membrane proton channel. These two domains are linked by a central stalk rotating inside the F(1) region and a stationary peripheral stalk. During catalysis, ATP synthesis in the catalytic domain of F(1) is coupled via a rotary mechanism of the central stalk subunits to proton translocation. In vivo, can only synthesize ATP although its ATP hydrolase activity can be activated artificially in vitro. Part of the complex F(0) domain. This is ATP synthase F(0) complex subunit 8 from Aythya americana (Redhead).